A 473-amino-acid chain; its full sequence is Trehalose-6-phosphate synthase (473 aa).

Arginine 10 serves as a coordination point for D-glucose 6-phosphate. 21–22 (GG) lines the UDP-alpha-D-glucose pocket. Residues tyrosine 76 and aspartate 130 each contribute to the D-glucose 6-phosphate site. Residues arginine 262 and lysine 267 each coordinate UDP-alpha-D-glucose. Arginine 300 is a binding site for D-glucose 6-phosphate. UDP-alpha-D-glucose is bound by residues phenylalanine 339 and 365-369 (LVAKE). The disordered stretch occupies residues 454–473 (TPRSPERQQQNNVATFPKLA).

Belongs to the glycosyltransferase 20 family. In terms of assembly, homotetramer.

It carries out the reaction D-glucose 6-phosphate + UDP-alpha-D-glucose = alpha,alpha-trehalose 6-phosphate + UDP + H(+). Its pathway is glycan biosynthesis; trehalose biosynthesis. In terms of biological role, probably involved in the osmoprotection via the biosynthesis of trehalose. Catalyzes the transfer of glucose from UDP-alpha-D-glucose (UDP-Glc) to D-glucose 6-phosphate (Glc-6-P) to form trehalose-6-phosphate. Acts with retention of the anomeric configuration of the UDP-sugar donor. This Salmonella choleraesuis (strain SC-B67) protein is Trehalose-6-phosphate synthase.